The chain runs to 343 residues: F17g-G fimbrial adhesin (343 aa).

An N-terminal signal peptide occupies residues 1–22; it reads MTNFYKVCLAVFILVCCNISHA. The interval 23-199 is receptor-binding lectin domain; sequence AVSFIGSTEN…LNPFTLNDTV (177 aa). Residues 65–66, 110–111, and 138–141 each bind a carbohydrate; these read AN, DT, and STQG. Cys75 and Cys132 are disulfide-bonded. The fimbrillin-binding domain stretch occupies residues 200–343; sequence TSCRLLTPSA…GISTFTFSYQ (144 aa). Residues 287 to 307 form a disordered region; that stretch reads LKFGPDSPVKGNENQWQLSTG. The segment covering 298 to 307 has biased composition (polar residues); that stretch reads NENQWQLSTG.

This sequence belongs to the fimbrial protein family.

It is found in the fimbrium. Essential fimbrial adhesion factor that mediates binding to N-acetylglucosamine-containing receptors in the host intestinal microvilli, leading to colonization of the intestinal tissue, and diarrhea or septicemia. Also confers adhesiveness to laminin and basement membranes. May be involved in the initiation of polymerization of fimbrillin monomers during fimbrial filament biogenesis. This chain is F17g-G fimbrial adhesin (f17gG), found in Escherichia coli.